The primary structure comprises 459 residues: tRNA modification GTPase MnmE (459 aa).

3 residues coordinate (6S)-5-formyl-5,6,7,8-tetrahydrofolate: arginine 22, glutamate 85, and arginine 124. The 160-residue stretch at 221-380 (GLSTVIVGKP…LEIQIRDLFF (160 aa)) folds into the TrmE-type G domain. K(+) is bound at residue asparagine 231. Residues 231–236 (NVGKSS), 250–256 (TEVAGTT), and 275–278 (DTAG) contribute to the GTP site. Serine 235 serves as a coordination point for Mg(2+). Positions 250, 252, and 255 each coordinate K(+). Threonine 256 provides a ligand contact to Mg(2+). Lysine 459 provides a ligand contact to (6S)-5-formyl-5,6,7,8-tetrahydrofolate.

The protein belongs to the TRAFAC class TrmE-Era-EngA-EngB-Septin-like GTPase superfamily. TrmE GTPase family. In terms of assembly, homodimer. Heterotetramer of two MnmE and two MnmG subunits. The cofactor is K(+).

It localises to the cytoplasm. Functionally, exhibits a very high intrinsic GTPase hydrolysis rate. Involved in the addition of a carboxymethylaminomethyl (cmnm) group at the wobble position (U34) of certain tRNAs, forming tRNA-cmnm(5)s(2)U34. The chain is tRNA modification GTPase MnmE from Staphylococcus aureus (strain MW2).